The primary structure comprises 300 residues: Estradiol 17-beta-dehydrogenase 11 (300 aa).

The first 19 residues, 1–19 (MKFLLDVLLLLPLLIVCSL), serve as a signal peptide directing secretion. Position 40–64 (40–64 (LITGAGHGIGRLTAYEFAKLKSKLV)) interacts with NADP(+). Ser172 provides a ligand contact to substrate. Tyr185 (proton acceptor) is an active-site residue.

Belongs to the short-chain dehydrogenases/reductases (SDR) family. 17-beta-HSD 3 subfamily.

The protein resides in the endoplasmic reticulum. Its subcellular location is the lipid droplet. The enzyme catalyses 17beta-estradiol + NAD(+) = estrone + NADH + H(+). It carries out the reaction 17beta-estradiol + NADP(+) = estrone + NADPH + H(+). In terms of biological role, can convert androstan-3-alpha,17-beta-diol (3-alpha-diol) to androsterone in vitro, suggesting that it may participate in androgen metabolism during steroidogenesis. May act by metabolizing compounds that stimulate steroid synthesis and/or by generating metabolites that inhibit it. Has no activity toward DHEA (dehydroepiandrosterone), or A-dione (4-androste-3,17-dione), and only a slight activity toward testosterone to A-dione. The protein is Estradiol 17-beta-dehydrogenase 11 (HSD17B11) of Pongo abelii (Sumatran orangutan).